A 137-amino-acid chain; its full sequence is Bombinin-like peptides 1 (137 aa).

The first 18 residues, 1 to 18 (MNFKYIVAVSILIASAYA), serve as a signal peptide directing secretion. N70 carries the post-translational modification Asparagine amide. The segment at 91 to 112 (LDSFEHPEEASEKETRGFNQEE) is disordered. Residue I118 is modified to D-allo-isoleucine. Residue I136 is modified to Isoleucine amide.

It belongs to the bombinin family. Expressed by the skin glands.

The protein localises to the secreted. Has antimicrobial activity, but no hemolytic activity. Preliminary evidence indicates that this peptide does not lyse and thus kill the bacteria by its antimicrobial activity. Functionally, bombinin H has antibacterial and hemolytic activity. This Bombina variegata (Yellow-bellied toad) protein is Bombinin-like peptides 1.